A 242-amino-acid polypeptide reads, in one-letter code: Segregation and condensation protein A (242 aa).

It belongs to the ScpA family. In terms of assembly, component of a cohesin-like complex composed of ScpA, ScpB and the Smc homodimer, in which ScpA and ScpB bind to the head domain of Smc. The presence of the three proteins is required for the association of the complex with DNA.

The protein resides in the cytoplasm. Its function is as follows. Participates in chromosomal partition during cell division. May act via the formation of a condensin-like complex containing Smc and ScpB that pull DNA away from mid-cell into both cell halves. The protein is Segregation and condensation protein A of Streptococcus mitis.